Consider the following 165-residue polypeptide: uncharacterized protein (165 aa).

In terms of domain architecture, Cupin type-1 spans 28 to 139 (QNALKDTGLA…KPNEREEAVK (112 aa)).

This is an uncharacterized protein from Bacillus subtilis (strain 168).